The sequence spans 379 residues: Dual-specificity RNA methyltransferase RlmN (379 aa).

The active-site Proton acceptor is the Glu-95. In terms of domain architecture, Radical SAM core spans 101–345 (EETRGTLCVS…TTVRKTRGDD (245 aa)). A disulfide bridge links Cys-108 with Cys-350. [4Fe-4S] cluster-binding residues include Cys-115, Cys-119, and Cys-122. Residues 176 to 177 (GE), Ser-208, 230 to 232 (SLH), and Asn-307 each bind S-adenosyl-L-methionine. The S-methylcysteine intermediate role is filled by Cys-350.

Belongs to the radical SAM superfamily. RlmN family. [4Fe-4S] cluster is required as a cofactor.

Its subcellular location is the cytoplasm. The enzyme catalyses adenosine(2503) in 23S rRNA + 2 reduced [2Fe-2S]-[ferredoxin] + 2 S-adenosyl-L-methionine = 2-methyladenosine(2503) in 23S rRNA + 5'-deoxyadenosine + L-methionine + 2 oxidized [2Fe-2S]-[ferredoxin] + S-adenosyl-L-homocysteine. It carries out the reaction adenosine(37) in tRNA + 2 reduced [2Fe-2S]-[ferredoxin] + 2 S-adenosyl-L-methionine = 2-methyladenosine(37) in tRNA + 5'-deoxyadenosine + L-methionine + 2 oxidized [2Fe-2S]-[ferredoxin] + S-adenosyl-L-homocysteine. Its function is as follows. Specifically methylates position 2 of adenine 2503 in 23S rRNA and position 2 of adenine 37 in tRNAs. m2A2503 modification seems to play a crucial role in the proofreading step occurring at the peptidyl transferase center and thus would serve to optimize ribosomal fidelity. This chain is Dual-specificity RNA methyltransferase RlmN, found in Burkholderia lata (strain ATCC 17760 / DSM 23089 / LMG 22485 / NCIMB 9086 / R18194 / 383).